The primary structure comprises 253 residues: Ubiquinone/menaquinone biosynthesis C-methyltransferase UbiE (253 aa).

S-adenosyl-L-methionine is bound by residues Thr76, Asp97, and 125 to 126; that span reads NA.

Belongs to the class I-like SAM-binding methyltransferase superfamily. MenG/UbiE family.

It catalyses the reaction a 2-demethylmenaquinol + S-adenosyl-L-methionine = a menaquinol + S-adenosyl-L-homocysteine + H(+). The catalysed reaction is a 2-methoxy-6-(all-trans-polyprenyl)benzene-1,4-diol + S-adenosyl-L-methionine = a 5-methoxy-2-methyl-3-(all-trans-polyprenyl)benzene-1,4-diol + S-adenosyl-L-homocysteine + H(+). It functions in the pathway quinol/quinone metabolism; menaquinone biosynthesis; menaquinol from 1,4-dihydroxy-2-naphthoate: step 2/2. The protein operates within cofactor biosynthesis; ubiquinone biosynthesis. Methyltransferase required for the conversion of demethylmenaquinol (DMKH2) to menaquinol (MKH2) and the conversion of 2-polyprenyl-6-methoxy-1,4-benzoquinol (DDMQH2) to 2-polyprenyl-3-methyl-6-methoxy-1,4-benzoquinol (DMQH2). This chain is Ubiquinone/menaquinone biosynthesis C-methyltransferase UbiE, found in Rhodopseudomonas palustris (strain BisB5).